The primary structure comprises 690 residues: Elongation factor G (690 aa).

Residues D8–L282 enclose the tr-type G domain. Residues A17–T24, D81–H85, and N135–D138 each bind GTP.

This sequence belongs to the TRAFAC class translation factor GTPase superfamily. Classic translation factor GTPase family. EF-G/EF-2 subfamily.

It localises to the cytoplasm. In terms of biological role, catalyzes the GTP-dependent ribosomal translocation step during translation elongation. During this step, the ribosome changes from the pre-translocational (PRE) to the post-translocational (POST) state as the newly formed A-site-bound peptidyl-tRNA and P-site-bound deacylated tRNA move to the P and E sites, respectively. Catalyzes the coordinated movement of the two tRNA molecules, the mRNA and conformational changes in the ribosome. The sequence is that of Elongation factor G from Caldanaerobacter subterraneus subsp. tengcongensis (strain DSM 15242 / JCM 11007 / NBRC 100824 / MB4) (Thermoanaerobacter tengcongensis).